The following is a 587-amino-acid chain: Putative adhesin (587 aa).

Residues 1–19 (MKFAISTLLIILQAAAVFA) form the signal peptide. Cysteine 211 and cysteine 261 form a disulfide bridge. The N-linked (GlcNAc...) asparagine glycan is linked to asparagine 239. 4 consecutive repeat copies span residues 432–455 (IVTV…TYTK), 466–489 (IVTV…TYTK), 491–512 (PEIV…YHDV), and 513–531 (PEVV…TTTY). A 4 X 24 AA approximate tandem repeats, Thr-rich region spans residues 432–531 (IVTVITKEGG…EGGEKVTTTY (100 aa)). Residue serine 562 is the site of GPI-anchor amidated serine attachment. A propeptide spans 563 to 587 (EAQVNLGSKSAVGLLAIVPMLFLAI) (removed in mature form).

The GPI-anchor is attached to the protein in the endoplasmic reticulum and serves to target the protein to the cell surface. There, the glucosamine-inositol phospholipid moiety is cleaved off and the GPI-modified mannoprotein is covalently attached via its lipidless GPI glycan remnant to the 1,6-beta-glucan of the outer cell wall layer.

Its subcellular location is the cell membrane. The protein localises to the secreted. It localises to the cell wall. Functionally, putative adhesion protein. May be involved in cell-cell interaction, interacting with other proteins by salt bridges and hydrogen bonds. In Komagataella phaffii (strain ATCC 76273 / CBS 7435 / CECT 11047 / NRRL Y-11430 / Wegner 21-1) (Yeast), this protein is Putative adhesin.